The primary structure comprises 138 residues: Basic phospholipase A2 homolog MjTX-I (138 aa).

Positions 1–16 (MRTLWIMAVLLVGVEG) are cleaved as a signal peptide. A suramin-binding site is contributed by valine 34. 7 cysteine pairs are disulfide-bonded: cysteine 42–cysteine 132, cysteine 44–cysteine 60, cysteine 59–cysteine 111, cysteine 65–cysteine 138, cysteine 66–cysteine 104, cysteine 73–cysteine 97, and cysteine 91–cysteine 102. Asparagine 43 contacts varespladib. Residues glycine 45 and glycine 48 each coordinate suramin. Residues histidine 63 and lysine 64 each contribute to the varespladib site. Lysine 85 provides a ligand contact to suramin.

It belongs to the phospholipase A2 family. Group II subfamily. K49 sub-subfamily. Monomer in solution. Homodimer; non-covalently linked (probable conventional/extended dimer conformation). Homotetramer (dimer of homodimer (probable conventional/extended dimer conformation)); non-covalently linked. Homooligomer. Expressed by the venom gland.

The protein localises to the secreted. Its activity is regulated as follows. Myotoxin activity is inhibited by suramin and varespladib. Inhibition by suramin may be caused by (i) distortion of MDiS from both monomers impairing the membrane disruption mechanism by the toxin and (ii) surface electrostatic changes of the complex that interfere with the toxin membrane dockage process (putative-MDoS is partially hidden). Inhibition by varespladib is probably through varespladib binding to MDoS. Snake venom phospholipase A2 homolog that lacks enzymatic activity. In vivo, it displays local myotoxin and edema-inducing activities and is lethal by intraperitoneal injection. The myotoxicity effect is weaker in comparison to other myotoxins, probably due to the formation of high molecular weight complexes and to the oligomeric conformation (conventional dimer). It shows specificity toward neurons and myotubes, but not on a variety of other cell types. This PLA2 excites a cohort of sensory neurons via ATP release and consequent activation of P2RX2 and/or P2RX3 purinergic receptors. Pannexin hemichannels act as downstream mediators of toxin-evoked ATP release. In vivo, it elicits nonneurogenic inflammatory pain, thermal hyperalgesia, and mechanical allodynia, of which the latter is completely dependent on purinergic signaling. This chain is Basic phospholipase A2 homolog MjTX-I, found in Bothrops moojeni (Lance-headed viper).